The primary structure comprises 434 residues: Sensor histidine kinase Hik2 (434 aa).

The region spanning 16–152 (ISLCQSQVRL…EAIAKSLAVA (137 aa)) is the GAF domain. C19 serves as a coordination point for [3Fe-4S] cluster. In terms of domain architecture, Histidine kinase spans 182 to 432 (DLLHQLRNPL…TFTLWLRSGE (251 aa)). Phosphohistidine; by autocatalysis is present on H185. The short motif at 357–361 (DTGYG) is the G1 box element. A G2 box motif is present at residues 386–390 (GTGLG).

This sequence belongs to the chloroplast sensor kinase protein family. Exists as monomers, tetramers, hexamers and other higher-order oligomers; all are able to autophosphorylate. Upon treatment with 0.5 M NaCl only tetramers are seen, which are probably inactive. Interacts with both RppA and Rre1. Requires [3Fe-4S] cluster as cofactor. Autophosphorylates, probably on His-185.

It localises to the cytoplasm. The enzyme catalyses ATP + protein L-histidine = ADP + protein N-phospho-L-histidine.. With respect to regulation, autophosphorylation is inhibited by Na(+) but not by Cl(-). Reducing agents dithionite, duroquinol and decyl-plastoquinone, but not NADPH or ferredoxin inhibit autophosphorylation. Oxidation of the Fe-S cluster (with potassium ferricyanide) induces a conformational change that is conducive to its autophosphorylation activity. Its function is as follows. Member of possibly 2 two-component regulatory system(s) Hik2/Rre1 and Hik2/RppA. Transduces PQ (plastoquinone) redox signals to photosystem gene expression machinery during the adjustment of photosystem stoichiometry. Reduced PQ suppresses its autophosphorylation activity (i.e. kinase activity is higher under oxidizing conditions). Member of two-component regulatory system Hik2/Rre1, controls expression of sigB (sll0306), sll0528, slr1119, slr0852 and ssr3188 in response to hyperosmotic stress. Activity responds to high salt (with a linear response as concentrations rise to 0.5 M NaCl); detects Cl(-) levels. Autophosphorylates and transfers phosphate to Rre1. May transfer phosphate to RppA in a possible Hik2/RppA two-component system. This Synechocystis sp. (strain ATCC 27184 / PCC 6803 / Kazusa) protein is Sensor histidine kinase Hik2.